The primary structure comprises 141 residues: Ribosome-binding factor A (141 aa).

The disordered stretch occupies residues Ser120–Leu141. The segment covering Glu129–Leu141 has biased composition (acidic residues).

The protein belongs to the RbfA family. As to quaternary structure, monomer. Binds 30S ribosomal subunits, but not 50S ribosomal subunits or 70S ribosomes.

It localises to the cytoplasm. Its function is as follows. One of several proteins that assist in the late maturation steps of the functional core of the 30S ribosomal subunit. Associates with free 30S ribosomal subunits (but not with 30S subunits that are part of 70S ribosomes or polysomes). Required for efficient processing of 16S rRNA. May interact with the 5'-terminal helix region of 16S rRNA. The protein is Ribosome-binding factor A of Zymomonas mobilis subsp. mobilis (strain ATCC 31821 / ZM4 / CP4).